The primary structure comprises 457 residues: Siroheme synthase (457 aa).

Residues 1-204 (MDHLPIFCQL…NDQKAITETT (204 aa)) form a precorrin-2 dehydrogenase /sirohydrochlorin ferrochelatase region. Residues 22–23 (DV) and 43–44 (LA) each bind NAD(+). Ser128 is modified (phosphoserine). The segment at 216–457 (GEVVLVGAGP…RDKLNWFSNH (242 aa)) is uroporphyrinogen-III C-methyltransferase. Pro225 provides a ligand contact to S-adenosyl-L-methionine. The Proton acceptor role is filled by Asp248. Residue Lys270 is the Proton donor of the active site. S-adenosyl-L-methionine contacts are provided by residues 301–303 (GGD), Ile306, 331–332 (TA), Met382, and Gly411.

The protein in the N-terminal section; belongs to the precorrin-2 dehydrogenase / sirohydrochlorin ferrochelatase family. It in the C-terminal section; belongs to the precorrin methyltransferase family.

The catalysed reaction is uroporphyrinogen III + 2 S-adenosyl-L-methionine = precorrin-2 + 2 S-adenosyl-L-homocysteine + H(+). It carries out the reaction precorrin-2 + NAD(+) = sirohydrochlorin + NADH + 2 H(+). The enzyme catalyses siroheme + 2 H(+) = sirohydrochlorin + Fe(2+). Its pathway is cofactor biosynthesis; adenosylcobalamin biosynthesis; precorrin-2 from uroporphyrinogen III: step 1/1. It functions in the pathway cofactor biosynthesis; adenosylcobalamin biosynthesis; sirohydrochlorin from precorrin-2: step 1/1. The protein operates within porphyrin-containing compound metabolism; siroheme biosynthesis; precorrin-2 from uroporphyrinogen III: step 1/1. It participates in porphyrin-containing compound metabolism; siroheme biosynthesis; siroheme from sirohydrochlorin: step 1/1. Its pathway is porphyrin-containing compound metabolism; siroheme biosynthesis; sirohydrochlorin from precorrin-2: step 1/1. Multifunctional enzyme that catalyzes the SAM-dependent methylations of uroporphyrinogen III at position C-2 and C-7 to form precorrin-2 via precorrin-1. Then it catalyzes the NAD-dependent ring dehydrogenation of precorrin-2 to yield sirohydrochlorin. Finally, it catalyzes the ferrochelation of sirohydrochlorin to yield siroheme. The chain is Siroheme synthase from Escherichia coli O6:H1 (strain CFT073 / ATCC 700928 / UPEC).